The primary structure comprises 108 residues: Protein YcgL (108 aa).

Residues 12-96 (MFCVIYRSSK…PPEDLLKQHL (85 aa)) enclose the YcgL domain.

This is Protein YcgL from Escherichia coli O17:K52:H18 (strain UMN026 / ExPEC).